Here is a 222-residue protein sequence, read N- to C-terminus: MENSSKEDYKIQSFDLETQKLLKTALKDPGSVDLEKVSSVIVDQSLKDQVFSREAGRICYTIVQAEAKQTNGSVFRRNLLNRLQQEFKAREETRKRSTQEWVCLVSFICNIFDYLKVNNMPMVALVHPVYDCLFRLAQSDALKNEEEVDCLVLQLHRIGDQLEKMNVQLMDELFNLLRDGFLLQEDLSSMGRLLLLEILEFRAGGWKLSDTAQKYYYSEVTD.

In terms of domain architecture, MIF4G spans 3–205; sequence NSSKEDYKIQ…LEILEFRAGG (203 aa).

Belongs to the MIF4GD family. As to quaternary structure, interacts with eif4g1, eif4g2 and slbp; probably tethered by SLBP to the 3'-end of mRNAs ending with the histone stem-loop, it also interacts with eif4g1 which is bound to their 5'-end.

Its subcellular location is the cytoplasm. It is found in the nucleus. Functions in replication-dependent translation of histone mRNAs which differ from other eukaryotic mRNAs in that they do not end with a poly-A tail but a stem-loop. May participate in circularizing those mRNAs specifically enhancing their translation. The sequence is that of MIF4G domain-containing protein B (mif4gdb) from Danio rerio (Zebrafish).